A 156-amino-acid chain; its full sequence is ATP synthase subunit b (156 aa).

A helical membrane pass occupies residues 3–23 (ITLTIFAQALAFAGLIWIVAT).

This sequence belongs to the ATPase B chain family. As to quaternary structure, F-type ATPases have 2 components, F(1) - the catalytic core - and F(0) - the membrane proton channel. F(1) has five subunits: alpha(3), beta(3), gamma(1), delta(1), epsilon(1). F(0) has three main subunits: a(1), b(2) and c(10-14). The alpha and beta chains form an alternating ring which encloses part of the gamma chain. F(1) is attached to F(0) by a central stalk formed by the gamma and epsilon chains, while a peripheral stalk is formed by the delta and b chains.

It is found in the cell inner membrane. Functionally, f(1)F(0) ATP synthase produces ATP from ADP in the presence of a proton or sodium gradient. F-type ATPases consist of two structural domains, F(1) containing the extramembraneous catalytic core and F(0) containing the membrane proton channel, linked together by a central stalk and a peripheral stalk. During catalysis, ATP synthesis in the catalytic domain of F(1) is coupled via a rotary mechanism of the central stalk subunits to proton translocation. Its function is as follows. Component of the F(0) channel, it forms part of the peripheral stalk, linking F(1) to F(0). The polypeptide is ATP synthase subunit b (Xanthomonas oryzae pv. oryzae (strain MAFF 311018)).